The sequence spans 241 residues: Trypsin-1 (241 aa).

Residues 1 to 13 form the signal peptide; it reads MKSLIFVLLLGAV. Positions 14–19 are cleaved as a propeptide — activation peptide; it reads FAEEDK. One can recognise a Peptidase S1 domain in the interval 20 to 239; that stretch reads IVGGYECTKH…LSGWVRDTMA (220 aa). Disulfide bonds link C26-C155, C44-C60, C128-C228, C135-C201, C166-C180, and C191-C215. Residues H59 and D103 each act as charge relay system in the active site. S195 acts as the Charge relay system in catalysis.

This sequence belongs to the peptidase S1 family.

Its subcellular location is the secreted. It localises to the extracellular space. The catalysed reaction is Preferential cleavage: Arg-|-Xaa, Lys-|-Xaa.. This Gadus morhua (Atlantic cod) protein is Trypsin-1.